The sequence spans 296 residues: NAD kinase (296 aa).

Residue D73 is the Proton acceptor of the active site. Residues 73 to 74 (DG), K78, 151 to 152 (NE), R178, D180, and 191 to 196 (TAHAMS) contribute to the NAD(+) site.

The protein belongs to the NAD kinase family. A divalent metal cation serves as cofactor.

It localises to the cytoplasm. The catalysed reaction is NAD(+) + ATP = ADP + NADP(+) + H(+). Its function is as follows. Involved in the regulation of the intracellular balance of NAD and NADP, and is a key enzyme in the biosynthesis of NADP. Catalyzes specifically the phosphorylation on 2'-hydroxyl of the adenosine moiety of NAD to yield NADP. This chain is NAD kinase, found in Francisella tularensis subsp. novicida (strain U112).